Consider the following 386-residue polypeptide: Chorismate synthase (386 aa).

The segment at L32–R60 is disordered. Residues D38–R47 are compositionally biased toward basic and acidic residues. R46 is an NADP(+) binding site. FMN contacts are provided by residues R123–S125, G290, K305–S309, and R332.

It belongs to the chorismate synthase family. The cofactor is FMNH2.

The catalysed reaction is 5-O-(1-carboxyvinyl)-3-phosphoshikimate = chorismate + phosphate. It participates in metabolic intermediate biosynthesis; chorismate biosynthesis; chorismate from D-erythrose 4-phosphate and phosphoenolpyruvate: step 7/7. Its function is as follows. Catalyzes the anti-1,4-elimination of the C-3 phosphate and the C-6 proR hydrogen from 5-enolpyruvylshikimate-3-phosphate (EPSP) to yield chorismate, which is the branch point compound that serves as the starting substrate for the three terminal pathways of aromatic amino acid biosynthesis. This reaction introduces a second double bond into the aromatic ring system. The protein is Chorismate synthase of Methanopyrus kandleri (strain AV19 / DSM 6324 / JCM 9639 / NBRC 100938).